The chain runs to 931 residues: Dual serine/threonine and tyrosine protein kinase (931 aa).

Residues 1 to 24 (MEGDAPQRVSERVSGPGPGGGGGG) form a disordered region. Residues 397–424 (RKKENELYESLMNIANRKQEEMKDMICE) are a coiled coil. The 255-residue stretch at 654–908 (PKLGQELGRG…PLLGIVQPML (255 aa)) folds into the Protein kinase domain. Residues 660-668 (LGRGQYGVV) and Lys683 contribute to the ATP site. Asp779 functions as the Proton acceptor in the catalytic mechanism.

This sequence belongs to the protein kinase superfamily. Ser/Thr protein kinase family.

Its subcellular location is the cytoplasm. The protein localises to the cell membrane. It is found in the apical cell membrane. It localises to the basolateral cell membrane. The protein resides in the cell junction. It carries out the reaction L-seryl-[protein] + ATP = O-phospho-L-seryl-[protein] + ADP + H(+). The catalysed reaction is L-threonyl-[protein] + ATP = O-phospho-L-threonyl-[protein] + ADP + H(+). It catalyses the reaction L-tyrosyl-[protein] + ATP = O-phospho-L-tyrosyl-[protein] + ADP + H(+). Acts as a positive regulator of ERK phosphorylation downstream of fibroblast growth factor-receptor activation. Involved in the regulation of both caspase-dependent apoptosis and caspase-independent cell death. In the skin, it plays a predominant role in suppressing caspase-dependent apoptosis in response to UV stress in a range of dermal cell types. This Canis lupus familiaris (Dog) protein is Dual serine/threonine and tyrosine protein kinase (DSTYK).